A 404-amino-acid polypeptide reads, in one-letter code: Acyl-[acyl-carrier-protein] desaturase 7, chloroplastic (404 aa).

The transit peptide at 1-39 (MAASATTSTLAVTMFGYPNRNCHLKPPATATLRFWRSAA) directs the protein to the chloroplast. 6 residues coordinate Fe cation: Glu-138, Glu-176, His-179, Glu-229, Glu-262, and His-265.

The protein belongs to the fatty acid desaturase type 2 family. Homodimer. Fe(2+) serves as cofactor.

It localises to the plastid. The protein resides in the chloroplast. It participates in lipid metabolism; fatty acid metabolism. Its function is as follows. Introduces a cis double bond in the acyl chain of an acyl-[acyl-carrier protein]. The polypeptide is Acyl-[acyl-carrier-protein] desaturase 7, chloroplastic (Oryza sativa subsp. indica (Rice)).